Consider the following 132-residue polypeptide: Dinoflagellate viral nucleoprotein 5 (132 aa).

Positions 1-44 (MAAMKKAMKVKKSAKKSAKKSGKKGGMKKKAKRVSKVARGKRAK) are enriched in basic residues. Positions 1–84 (MAAMKKAMKV…KKQSEHGKKI (84 aa)) are disordered. A compositionally biased stretch (polar residues) spans 57–66 (GGLTKNSLVK).

In terms of processing, phosphorylated.

It is found in the nucleus. The protein localises to the chromosome. Its function is as follows. DNA-binding protein, which similarly to histones, may compact DNA into chromatin. The polypeptide is Dinoflagellate viral nucleoprotein 5 (Hematodinium sp).